Here is a 440-residue protein sequence, read N- to C-terminus: UDP-N-acetylmuramoylalanine--D-glutamate ligase (440 aa).

109-115 (GTNGKTT) is an ATP binding site.

Belongs to the MurCDEF family.

It localises to the cytoplasm. It catalyses the reaction UDP-N-acetyl-alpha-D-muramoyl-L-alanine + D-glutamate + ATP = UDP-N-acetyl-alpha-D-muramoyl-L-alanyl-D-glutamate + ADP + phosphate + H(+). Its pathway is cell wall biogenesis; peptidoglycan biosynthesis. Cell wall formation. Catalyzes the addition of glutamate to the nucleotide precursor UDP-N-acetylmuramoyl-L-alanine (UMA). The chain is UDP-N-acetylmuramoylalanine--D-glutamate ligase from Rubrobacter xylanophilus (strain DSM 9941 / JCM 11954 / NBRC 16129 / PRD-1).